Here is a 286-residue protein sequence, read N- to C-terminus: Protoheme IX farnesyltransferase (286 aa).

8 helical membrane passes run 14 to 31 (FRLTSTVAFSSGMGYILA), 38 to 58 (WLNLVLFLIGGFSITVSANII), 94 to 114 (LFLIAGTVILAVYSTLNALIL), 135 to 155 (IAVFIGAFPGAFPPMIGWIAV), 165 to 185 (VLFAIQFLWQFPHFWAIAWVL), 207 to 227 (TATIIMTYTLCLLPLGFLPYL), 228 to 248 (FGMSGITSAYIALACGILFFF), and 262 to 282 (ALLLMFGSFLYLPIVQIAFVL).

Belongs to the UbiA prenyltransferase family. Protoheme IX farnesyltransferase subfamily.

Its subcellular location is the cell inner membrane. The catalysed reaction is heme b + (2E,6E)-farnesyl diphosphate + H2O = Fe(II)-heme o + diphosphate. It functions in the pathway porphyrin-containing compound metabolism; heme O biosynthesis; heme O from protoheme: step 1/1. Converts heme B (protoheme IX) to heme O by substitution of the vinyl group on carbon 2 of heme B porphyrin ring with a hydroxyethyl farnesyl side group. The polypeptide is Protoheme IX farnesyltransferase (Cytophaga hutchinsonii (strain ATCC 33406 / DSM 1761 / CIP 103989 / NBRC 15051 / NCIMB 9469 / D465)).